The sequence spans 155 residues: Fibroblast growth factor 2 (155 aa).

Positions 1–9 (MAAGSITTL) are excised as a propeptide. The interval 1 to 20 (MAAGSITTLPALPEDGGSSA) is disordered. N36 is a heparin binding site. Positions 46–48 (DGR) match the Cell attachment site; atypical motif. Y82 is modified (phosphotyrosine; by TEC). The Cell attachment site; atypical signature appears at 88 to 90 (DGR). K95 participates in a covalent cross-link: Glycyl lysine isopeptide (Lys-Gly) (interchain with G-Cter in SUMO1). Residues 128–144 (KRTGQYKLGPKTGPGQK) are heparin-binding.

The protein belongs to the heparin-binding growth factors family. As to quaternary structure, monomer. Homodimer. Interacts with FGFR1, FGFR2, FGFR3 and FGFR4. Affinity between fibroblast growth factors (FGFs) and their receptors is increased by heparan sulfate glycosaminoglycans that function as coreceptors. Interacts with CSPG4, FGFBP1 and TEC. Found in a complex with FGFBP1, FGF1 and FGF2. Interacts with FGFBP3. Interacts with integrin ITGAV:ITGB3; the interaction is required for FGF2 signaling. Interacts with SNORC (via the extracellular domain). Interacts with glypican GPC3. In terms of processing, phosphorylation at Tyr-82 regulates FGF2 unconventional secretion.

Its subcellular location is the secreted. The protein localises to the nucleus. Functionally, acts as a ligand for FGFR1, FGFR2, FGFR3 and FGFR4. Also acts as an integrin ligand which is required for FGF2 signaling. Binds to integrin ITGAV:ITGB3. Plays an important role in the regulation of cell survival, cell division, cell differentiation and cell migration. Functions as a potent mitogen in vitro. Can induce angiogenesis. Mediates phosphorylation of ERK1/2 and thereby promotes retinal lens fiber differentiation. In Ovis aries (Sheep), this protein is Fibroblast growth factor 2 (FGF2).